Reading from the N-terminus, the 238-residue chain is ATP synthase subunit a (238 aa).

The next 5 membrane-spanning stretches (helical) occupy residues 18–38 (LTILAMSLLTITIIFILVFWA), 75–95 (YSLLMFILFSFVFIANNLGLM), 112–132 (NFGVDITLSLLVAFICHIEGI), 179–199 (VVTGLLLQLAVLSPFTGPLAF), and 203–223 (IVWTAFSMFIGFIQAYVFIIL).

Belongs to the ATPase A chain family. F-type ATPases have 2 components, CF(1) - the catalytic core - and CF(0) - the membrane proton channel. CF(1) has five subunits: alpha(3), beta(3), gamma(1), delta(1), epsilon(1). CF(0) has three main subunits: a(1), b(2) and c(9-12). The alpha and beta chains form an alternating ring which encloses part of the gamma chain. CF(1) is attached to CF(0) by a central stalk formed by the gamma and epsilon chains, while a peripheral stalk is formed by the delta and b chains.

The protein resides in the cell membrane. Functionally, key component of the proton channel; it plays a direct role in the translocation of protons across the membrane. The protein is ATP synthase subunit a of Streptococcus agalactiae serotype Ia (strain ATCC 27591 / A909 / CDC SS700).